The chain runs to 122 residues: uncharacterized protein (122 aa).

3 consecutive transmembrane segments (helical) span residues 21–40 (VWSWRRLFIFRVLNVVSIAI), 57–77 (YTHMAIPLSTCLFCLCLCICI), and 94–114 (LLFSVFHLVFSTIALSIYCIY).

The protein localises to the membrane. This is an uncharacterized protein from Saccharomyces cerevisiae (strain ATCC 204508 / S288c) (Baker's yeast).